A 214-amino-acid chain; its full sequence is Large ribosomal subunit protein uL3 (214 aa).

Positions 133-154 (GLGAGHGTQRKHRSPGSIGGCA) are disordered.

Belongs to the universal ribosomal protein uL3 family. In terms of assembly, part of the 50S ribosomal subunit. Forms a cluster with proteins L14 and L19.

One of the primary rRNA binding proteins, it binds directly near the 3'-end of the 23S rRNA, where it nucleates assembly of the 50S subunit. This chain is Large ribosomal subunit protein uL3, found in Streptomyces avermitilis (strain ATCC 31267 / DSM 46492 / JCM 5070 / NBRC 14893 / NCIMB 12804 / NRRL 8165 / MA-4680).